Consider the following 658-residue polypeptide: UvrABC system protein B (658 aa).

Residues 26 to 414 enclose the Helicase ATP-binding domain; that stretch reads DGLRRGVKHQ…PGVVEQIIRP (389 aa). Position 39 to 46 (39 to 46) interacts with ATP; sequence GATGTGKT. The short motif at 92–115 is the Beta-hairpin element; the sequence is YYDYYQPEAYVPQTDTYIEKDAKI. The Helicase C-terminal domain occupies 430–596; that stretch reads QIDDLIGEIR…TVKKEIRDVI (167 aa). The UVR domain occupies 622–657; it reads EELIRTLEAEMKEAAKALDFERAAQLRDIIFELKAE.

Belongs to the UvrB family. As to quaternary structure, forms a heterotetramer with UvrA during the search for lesions. Interacts with UvrC in an incision complex.

It is found in the cytoplasm. The UvrABC repair system catalyzes the recognition and processing of DNA lesions. A damage recognition complex composed of 2 UvrA and 2 UvrB subunits scans DNA for abnormalities. Upon binding of the UvrA(2)B(2) complex to a putative damaged site, the DNA wraps around one UvrB monomer. DNA wrap is dependent on ATP binding by UvrB and probably causes local melting of the DNA helix, facilitating insertion of UvrB beta-hairpin between the DNA strands. Then UvrB probes one DNA strand for the presence of a lesion. If a lesion is found the UvrA subunits dissociate and the UvrB-DNA preincision complex is formed. This complex is subsequently bound by UvrC and the second UvrB is released. If no lesion is found, the DNA wraps around the other UvrB subunit that will check the other stand for damage. This Geobacillus kaustophilus (strain HTA426) protein is UvrABC system protein B.